The chain runs to 111 residues: Toxin 3FTx-Tri3 (111 aa).

An N-terminal signal peptide occupies residues 1 to 19 (MKTLLLALVVVAFMCLGSA). The propeptide occupies 20-34 (DEVGLGNEQIDRGRR). Glutamine 35 is subject to Pyrrolidone carboxylic acid. Cystine bridges form between cysteine 44/cysteine 68, cysteine 47/cysteine 87, cysteine 91/cysteine 102, and cysteine 103/cysteine 108.

It belongs to the three-finger toxin family. Ancestral subfamily. Boigatoxin sub-subfamily. Expressed by the venom gland.

The protein resides in the secreted. In terms of biological role, potent postsynaptic neurotoxin. Displays readily reversible competitive antagonism at the nicotinic acetylcholine receptor (nAChR). The protein is Toxin 3FTx-Tri3 of Trimorphodon biscutatus (Western lyre snake).